An 870-amino-acid chain; its full sequence is DNA mismatch repair protein MutS (870 aa).

Residue 621 to 628 (GPNMAGKS) participates in ATP binding. The segment at 813–834 (GAPRIAKSRRQRTPDPSPQFSL) is disordered.

The protein belongs to the DNA mismatch repair MutS family.

In terms of biological role, this protein is involved in the repair of mismatches in DNA. It is possible that it carries out the mismatch recognition step. This protein has a weak ATPase activity. The protein is DNA mismatch repair protein MutS of Pelobacter propionicus (strain DSM 2379 / NBRC 103807 / OttBd1).